The sequence spans 195 residues: Imidazoleglycerol-phosphate dehydratase (195 aa).

The protein belongs to the imidazoleglycerol-phosphate dehydratase family.

It localises to the cytoplasm. It catalyses the reaction D-erythro-1-(imidazol-4-yl)glycerol 3-phosphate = 3-(imidazol-4-yl)-2-oxopropyl phosphate + H2O. It participates in amino-acid biosynthesis; L-histidine biosynthesis; L-histidine from 5-phospho-alpha-D-ribose 1-diphosphate: step 6/9. The chain is Imidazoleglycerol-phosphate dehydratase from Parafrankia sp. (strain EAN1pec).